The sequence spans 514 residues: Intracellular exo-alpha-L-arabinofuranosidase (514 aa).

Residues Glu-47 and Asn-194 each contribute to the alpha-L-arabinofuranose site. The active-site Proton donor/acceptor is the Glu-195. The alpha-L-arabinofuranose site is built by Tyr-261, Glu-317, and Gln-366. Residue Glu-317 is the Nucleophile of the active site.

This sequence belongs to the glycosyl hydrolase 51 family. Homohexamer; trimer of dimers.

Its subcellular location is the cytoplasm. The catalysed reaction is Hydrolysis of terminal non-reducing alpha-L-arabinofuranoside residues in alpha-L-arabinosides.. Its pathway is glycan metabolism; L-arabinan degradation. Functionally, involved in the degradation of arabinan and is a key enzyme in the complete degradation of the plant cell wall. Catalyzes the cleavage of terminal alpha-L-arabinofuranosyl residues in different hemicellulosic homopolysaccharides (branched and debranched arabinans) and heteropolysaccharides (arabinoxylans). In Bacteroides ovatus, this protein is Intracellular exo-alpha-L-arabinofuranosidase (asdII).